Consider the following 311-residue polypeptide: HPr kinase/phosphorylase (311 aa).

Residues H138 and K159 contribute to the active site. ATP is bound at residue 153-160 (GKSGVGKS). S160 serves as a coordination point for Mg(2+). The active-site Proton acceptor; for phosphorylation activity. Proton donor; for dephosphorylation activity is D177. Residues 201 to 210 (LEIRGLGIIN) are important for the catalytic mechanism of both phosphorylation and dephosphorylation. Position 202 (E202) interacts with Mg(2+). The active site involves R243. The important for the catalytic mechanism of dephosphorylation stretch occupies residues 264–269 (PVRPGR).

The protein belongs to the HPrK/P family. In terms of assembly, homohexamer. Mg(2+) serves as cofactor.

The enzyme catalyses [HPr protein]-L-serine + ATP = [HPr protein]-O-phospho-L-serine + ADP + H(+). The catalysed reaction is [HPr protein]-O-phospho-L-serine + phosphate + H(+) = [HPr protein]-L-serine + diphosphate. Functionally, catalyzes the ATP- as well as the pyrophosphate-dependent phosphorylation of a specific serine residue in HPr, a phosphocarrier protein of the phosphoenolpyruvate-dependent sugar phosphotransferase system (PTS). HprK/P also catalyzes the pyrophosphate-producing, inorganic phosphate-dependent dephosphorylation (phosphorolysis) of seryl-phosphorylated HPr (P-Ser-HPr). The two antagonistic activities of HprK/P are regulated by several intracellular metabolites, which change their concentration in response to the absence or presence of rapidly metabolisable carbon sources (glucose, fructose, etc.) in the growth medium. Also phosphorylates/dephosphorylates the HPr-like catabolite repression protein crh on a specific serine residue. Therefore, by controlling the phosphorylation state of HPr and crh, HPrK/P is a sensor enzyme that plays a major role in the regulation of carbon metabolism and sugar transport: it mediates carbon catabolite repression (CCR), and regulates PTS-catalyzed carbohydrate uptake and inducer exclusion. This is HPr kinase/phosphorylase from Geobacillus kaustophilus (strain HTA426).